The sequence spans 202 residues: Cyclin-U4-1 (202 aa).

Belongs to the cyclin family. Cyclin U/P subfamily. Interacts with CDKA-1. Expressed in roots, stems and flowers. Expressed in the shoot apex, leaf primordia and young leaves.

This is Cyclin-U4-1 (CYCU4-1) from Arabidopsis thaliana (Mouse-ear cress).